The following is a 258-amino-acid chain: Phosphate import ATP-binding protein PstB 2 (258 aa).

The region spanning 12 to 253 (IQVRDLNFYY…PRQKQTEDYI (242 aa)) is the ABC transporter domain. 44 to 51 (GPSGCGKS) lines the ATP pocket.

It belongs to the ABC transporter superfamily. Phosphate importer (TC 3.A.1.7) family. In terms of assembly, the complex is composed of two ATP-binding proteins (PstB), two transmembrane proteins (PstC and PstA) and a solute-binding protein (PstS).

Its subcellular location is the cell inner membrane. It catalyses the reaction phosphate(out) + ATP + H2O = ADP + 2 phosphate(in) + H(+). In terms of biological role, part of the ABC transporter complex PstSACB involved in phosphate import. Responsible for energy coupling to the transport system. The protein is Phosphate import ATP-binding protein PstB 2 of Pectobacterium atrosepticum (strain SCRI 1043 / ATCC BAA-672) (Erwinia carotovora subsp. atroseptica).